Consider the following 604-residue polypeptide: Glucose oxidase 2 (604 aa).

An N-terminal signal peptide occupies residues 1 to 16; it reads MKLLGLLSGLVVVATA. Residues Leu49 and Thr50 each contribute to the FAD site. The N-linked (GlcNAc...) asparagine glycan is linked to Asn63. Glu70 serves as a coordination point for FAD. A glycan (N-linked (GlcNAc...) asparagine) is linked at Asn109. FAD is bound by residues Ser123, Asn127, Gly128, and Ser130. The cysteines at positions 184 and 226 are disulfide-linked. An N-linked (GlcNAc...) asparagine glycan is attached at Asn214. Val270 lines the FAD pocket. 3 N-linked (GlcNAc...) asparagine glycosylation sites follow: Asn375, Asn408, and Asn517. The Proton acceptor role is filled by His536. Residues Arg557 and Val558 each contribute to the O2 site. 2 residues coordinate FAD: Gly569 and Met581. Asn600 is a glycosylation site (N-linked (GlcNAc...) asparagine).

It belongs to the GMC oxidoreductase family. As to quaternary structure, homodimer. FAD serves as cofactor.

It is found in the secreted. The protein resides in the cell wall. The protein localises to the cytoplasm. It localises to the extracellular space. Its subcellular location is the extracellular matrix. It catalyses the reaction beta-D-glucose + O2 = D-glucono-1,5-lactone + H2O2. Functionally, glucose oxidase catalyzes the oxidation of beta-D-glucose to D-glucono-delta-lactone and hydrogen peroxide in the presence of molecular oxygen. D-glucono-delta-lactone is sequentially hydrolyzed by lactonase to D-gluconic acid, and the resulting hydrogen peroxide is hydrolyzed by catalase to oxygen and water. Acts as a key factor contributing to fungal disease of apple. The production of gluconic acid leads to host tissue acidification that enhances the expression of pectolytic enzymes and the establishment of conditions for necrotrophic development of P.expansum. In Penicillium expansum (Blue mold rot fungus), this protein is Glucose oxidase 2.